Consider the following 1590-residue polypeptide: Pentafunctional AROM polypeptide (1590 aa).

The segment at 1–400 (MSTANGSSPT…HEPKASSVDD (400 aa)) is 3-dehydroquinate synthase. Residues 49–51 (DTN), 96–99 (EGSK), 127–129 (GGV), and Asp-132 each bind NAD(+). Arg-143 provides a ligand contact to 7-phospho-2-dehydro-3-deoxy-D-arabino-heptonate. Residue 152 to 153 (TT) coordinates NAD(+). 7-phospho-2-dehydro-3-deoxy-D-arabino-heptonate contacts are provided by Asp-159 and Lys-165. Lys-174 provides a ligand contact to NAD(+). Asn-175 is a binding site for 7-phospho-2-dehydro-3-deoxy-D-arabino-heptonate. NAD(+) contacts are provided by residues 192–195 (FLNT) and Asn-203. Position 207 (Glu-207) interacts with Zn(2+). 7-phospho-2-dehydro-3-deoxy-D-arabino-heptonate-binding positions include 207-210 (EVIK) and Lys-266. Catalysis depends on Glu-276, which acts as the Proton acceptor; for 3-dehydroquinate synthase activity. Residues 280 to 284 (RNLLN) and His-287 contribute to the 7-phospho-2-dehydro-3-deoxy-D-arabino-heptonate site. His-287 provides a ligand contact to Zn(2+). The Proton acceptor; for 3-dehydroquinate synthase activity role is filled by His-291. His-303 and Lys-372 together coordinate 7-phospho-2-dehydro-3-deoxy-D-arabino-heptonate. His-303 contacts Zn(2+). An EPSP synthase region spans residues 413-856 (VQPGVRPGLK…WDVLSGVFGV (444 aa)). Catalysis depends on Cys-838, which acts as the For EPSP synthase activity. The interval 876–1070 (NRSVFVIGMR…KAKPHSFFVS (195 aa)) is shikimate kinase. An ATP-binding site is contributed by 883–890 (GMRGAGKS). Positions 1071-1285 (LTVPNITAHT…AAPGQLTAAE (215 aa)) are 3-dehydroquinase. The Proton acceptor; for 3-dehydroquinate dehydratase activity role is filled by His-1187. The active-site Schiff-base intermediate with substrate; for 3-dehydroquinate dehydratase activity is Lys-1215. The segment at 1298–1590 (KRKFYLFGKP…IVMNGTSDSS (293 aa)) is shikimate dehydrogenase.

It in the N-terminal section; belongs to the sugar phosphate cyclases superfamily. Dehydroquinate synthase family. This sequence in the 2nd section; belongs to the EPSP synthase family. In the 3rd section; belongs to the shikimate kinase family. The protein in the 4th section; belongs to the type-I 3-dehydroquinase family. It in the C-terminal section; belongs to the shikimate dehydrogenase family. As to quaternary structure, homodimer. Zn(2+) serves as cofactor.

The protein resides in the cytoplasm. The catalysed reaction is 7-phospho-2-dehydro-3-deoxy-D-arabino-heptonate = 3-dehydroquinate + phosphate. The enzyme catalyses 3-dehydroquinate = 3-dehydroshikimate + H2O. It catalyses the reaction shikimate + NADP(+) = 3-dehydroshikimate + NADPH + H(+). It carries out the reaction shikimate + ATP = 3-phosphoshikimate + ADP + H(+). The catalysed reaction is 3-phosphoshikimate + phosphoenolpyruvate = 5-O-(1-carboxyvinyl)-3-phosphoshikimate + phosphate. It functions in the pathway metabolic intermediate biosynthesis; chorismate biosynthesis; chorismate from D-erythrose 4-phosphate and phosphoenolpyruvate: step 2/7. The protein operates within metabolic intermediate biosynthesis; chorismate biosynthesis; chorismate from D-erythrose 4-phosphate and phosphoenolpyruvate: step 3/7. Its pathway is metabolic intermediate biosynthesis; chorismate biosynthesis; chorismate from D-erythrose 4-phosphate and phosphoenolpyruvate: step 4/7. It participates in metabolic intermediate biosynthesis; chorismate biosynthesis; chorismate from D-erythrose 4-phosphate and phosphoenolpyruvate: step 5/7. It functions in the pathway metabolic intermediate biosynthesis; chorismate biosynthesis; chorismate from D-erythrose 4-phosphate and phosphoenolpyruvate: step 6/7. The AROM polypeptide catalyzes 5 consecutive enzymatic reactions in prechorismate polyaromatic amino acid biosynthesis. The polypeptide is Pentafunctional AROM polypeptide (Pyricularia oryzae (strain 70-15 / ATCC MYA-4617 / FGSC 8958) (Rice blast fungus)).